A 104-amino-acid polypeptide reads, in one-letter code: Pyrimidine/purine nucleoside phosphorylase (104 aa).

It belongs to the nucleoside phosphorylase PpnP family.

The enzyme catalyses a purine D-ribonucleoside + phosphate = a purine nucleobase + alpha-D-ribose 1-phosphate. It catalyses the reaction adenosine + phosphate = alpha-D-ribose 1-phosphate + adenine. The catalysed reaction is cytidine + phosphate = cytosine + alpha-D-ribose 1-phosphate. It carries out the reaction guanosine + phosphate = alpha-D-ribose 1-phosphate + guanine. The enzyme catalyses inosine + phosphate = alpha-D-ribose 1-phosphate + hypoxanthine. It catalyses the reaction thymidine + phosphate = 2-deoxy-alpha-D-ribose 1-phosphate + thymine. The catalysed reaction is uridine + phosphate = alpha-D-ribose 1-phosphate + uracil. It carries out the reaction xanthosine + phosphate = alpha-D-ribose 1-phosphate + xanthine. Functionally, catalyzes the phosphorolysis of diverse nucleosides, yielding D-ribose 1-phosphate and the respective free bases. Can use uridine, adenosine, guanosine, cytidine, thymidine, inosine and xanthosine as substrates. Also catalyzes the reverse reactions. The chain is Pyrimidine/purine nucleoside phosphorylase from Herminiimonas arsenicoxydans.